The primary structure comprises 393 residues: Fractalkine (393 aa).

A signal peptide spans 1–24 (MAPSQLAWLLRLAAFFHLCTLLAG). A chemokine and involved in interaction with ITGAV:ITGB3 and ITGA4:ITGB1 region spans residues 25-100 (QHLGMTKCNI…HQTAALTRNG (76 aa)). Over 25–337 (QHLGMTKCNI…PDSQAATRRQ (313 aa)) the chain is Extracellular. 2 disulfide bridges follow: C32–C58 and C36–C74. N33 is a glycosylation site (N-linked (GlcNAc...) asparagine). The interval 101–337 (GKFEKRVDNV…PDSQAATRRQ (237 aa)) is mucin-like stalk. 2 disordered regions span residues 114–184 (ITSA…PQST) and 213–303 (EKAT…SGSQ). 2 stretches are compositionally biased toward polar residues: residues 153-172 (GTSQ…TSKA) and 223-240 (ALST…NVGS). The chain crosses the membrane as a helical span at residues 338–358 (AVGLLAFLGLLFCLGVAMFAY). At 359–393 (QSLQGCPRKMAGEMVEGLRYVPRSCGSNSYVLVPV) the chain is on the cytoplasmic side.

Belongs to the intercrine delta family. Monomer. Forms a ternary complex with CX3CR1 and ITGAV:ITGB3 or ITGA4:ITGB1. Post-translationally, a soluble short form may be released by proteolytic cleavage from the long membrane-anchored form. As to expression, highest levels in brain (neurons). Significant levels in kidney, heart, lung and adrenal gland.

Its subcellular location is the cell membrane. It localises to the secreted. Chemokine that acts as a ligand for both CX3CR1 and integrins ITGAV:ITGB3 and ITGA4:ITGB1. The CX3CR1-CX3CL1 signaling exerts distinct functions in different tissue compartments, such as immune response, inflammation, cell adhesion and chemotaxis. Regulates leukocyte adhesion and migration processes at the endothelium. Can activate integrins in both a CX3CR1-dependent and CX3CR1-independent manner. In the presence of CX3CR1, activates integrins by binding to the classical ligand-binding site (site 1) in integrins. In the absence of CX3CR1, binds to a second site (site 2) in integrins which is distinct from site 1 and enhances the binding of other integrin ligands to site 1. In terms of biological role, the soluble form is chemotactic for T-cells and monocytes, but not for neutrophils. Its function is as follows. The membrane-bound form promotes adhesion of those leukocytes to endothelial cells. This Rattus norvegicus (Rat) protein is Fractalkine (Cx3cl1).